We begin with the raw amino-acid sequence, 601 residues long: Proline--tRNA ligase (601 aa).

The protein belongs to the class-II aminoacyl-tRNA synthetase family. ProS type 1 subfamily. As to quaternary structure, homodimer.

The protein localises to the cytoplasm. The enzyme catalyses tRNA(Pro) + L-proline + ATP = L-prolyl-tRNA(Pro) + AMP + diphosphate. Its function is as follows. Catalyzes the attachment of proline to tRNA(Pro) in a two-step reaction: proline is first activated by ATP to form Pro-AMP and then transferred to the acceptor end of tRNA(Pro). As ProRS can inadvertently accommodate and process non-cognate amino acids such as alanine and cysteine, to avoid such errors it has two additional distinct editing activities against alanine. One activity is designated as 'pretransfer' editing and involves the tRNA(Pro)-independent hydrolysis of activated Ala-AMP. The other activity is designated 'posttransfer' editing and involves deacylation of mischarged Ala-tRNA(Pro). The misacylated Cys-tRNA(Pro) is not edited by ProRS. The polypeptide is Proline--tRNA ligase (Tropheryma whipplei (strain TW08/27) (Whipple's bacillus)).